A 122-amino-acid chain; its full sequence is Large ribosomal subunit protein bL12 (122 aa).

The protein belongs to the bacterial ribosomal protein bL12 family. In terms of assembly, homodimer. Part of the ribosomal stalk of the 50S ribosomal subunit. Forms a multimeric L10(L12)X complex, where L10 forms an elongated spine to which 2 to 4 L12 dimers bind in a sequential fashion. Binds GTP-bound translation factors.

Forms part of the ribosomal stalk which helps the ribosome interact with GTP-bound translation factors. Is thus essential for accurate translation. This is Large ribosomal subunit protein bL12 from Xylella fastidiosa (strain M23).